An 89-amino-acid chain; its full sequence is Small ribosomal subunit protein uS15 (89 aa).

The protein belongs to the universal ribosomal protein uS15 family. In terms of assembly, part of the 30S ribosomal subunit. Forms a bridge to the 50S subunit in the 70S ribosome, contacting the 23S rRNA.

Functionally, one of the primary rRNA binding proteins, it binds directly to 16S rRNA where it helps nucleate assembly of the platform of the 30S subunit by binding and bridging several RNA helices of the 16S rRNA. In terms of biological role, forms an intersubunit bridge (bridge B4) with the 23S rRNA of the 50S subunit in the ribosome. The sequence is that of Small ribosomal subunit protein uS15 from Heliobacterium modesticaldum (strain ATCC 51547 / Ice1).